The following is a 123-amino-acid chain: Protein LLP homolog (123 aa).

Positions 1 to 21 (MAKSLRSKWKRKMRAEKRKKN) are enriched in basic residues. Disordered regions lie at residues 1–22 (MAKS…KKNA) and 61–123 (DLDV…KLAW). Residues 70-89 (ESSKMDTELKRNKKNLRDQH) are compositionally biased toward basic and acidic residues. The span at 100–123 (QQKKLKSQCGKKKGKSKQAKKLAW) shows a compositional bias: basic residues.

This sequence belongs to the learning-associated protein family.

The protein localises to the nucleus. It is found in the nucleolus. Its subcellular location is the chromosome. Regulates dendritic and spine growth and synaptic transmission. This chain is Protein LLP homolog (llph), found in Xenopus laevis (African clawed frog).